The primary structure comprises 250 residues: Formylaminopyrimidine transport permease protein ThiX (250 aa).

6 helical membrane passes run 5–25 (YQAL…EISA), 62–82 (IISI…LLMF), 94–114 (LLVA…VLWF), 115–135 (GYSI…PITV), 172–192 (LPSF…GAAV), and 216–236 (PGVF…FAAI). One can recognise an ABC transmembrane type-1 domain in the interval 56–237 (LPATLAIISI…LGILGFAAIK (182 aa)).

It belongs to the binding-protein-dependent transport system permease family. The complex is likely composed of an ATP-binding protein (ThiZ), a transmembrane protein (ThiX) and a solute-binding protein (ThiY).

It localises to the cell membrane. It participates in cofactor biosynthesis; thiamine diphosphate biosynthesis. Functionally, participates in a thiamine pyrimidine salvage pathway as part of the ABC transporter complex ThiXYZ involved in the import of thiamine degradation products such as the formylaminopyrimidine N-formyl-4-amino-5-aminomethyl-2-methylpyrimidine (FAMP). Is probably responsible for the translocation of the substrate across the membrane. This Halalkalibacterium halodurans (strain ATCC BAA-125 / DSM 18197 / FERM 7344 / JCM 9153 / C-125) (Bacillus halodurans) protein is Formylaminopyrimidine transport permease protein ThiX.